Here is a 124-residue protein sequence, read N- to C-terminus: Acidic phospholipase A2 (124 aa).

Intrachain disulfides connect C26–C117, C28–C44, C43–C97, C49–C124, C50–C90, C57–C83, and C77–C88. 3 residues coordinate Ca(2+): Y27, G29, and G31. H47 is an active-site residue. Ca(2+) is bound at residue D48. E89 is an active-site residue.

It belongs to the phospholipase A2 family. Group II subfamily. D49 sub-subfamily. Requires Ca(2+) as cofactor. As to expression, expressed by the venom gland.

It localises to the secreted. The catalysed reaction is a 1,2-diacyl-sn-glycero-3-phosphocholine + H2O = a 1-acyl-sn-glycero-3-phosphocholine + a fatty acid + H(+). Functionally, snake venom phospholipase A2 (PLA2) that inhibits collagen- and ADP-induced platelet aggregation. PLA2 catalyzes the calcium-dependent hydrolysis of the 2-acyl groups in 3-sn-phosphoglycerides. This is Acidic phospholipase A2 from Bothrops jararaca (Jararaca).